Here is a 648-residue protein sequence, read N- to C-terminus: DNA ligase (648 aa).

Residues 30–34 (DEEYD) and 79–80 (SQ) each bind NAD(+). Lysine 110 serves as the catalytic N6-AMP-lysine intermediate. Positions 131, 165, 280, and 304 each coordinate NAD(+). Residues cysteine 398, cysteine 401, cysteine 414, and cysteine 419 each contribute to the Zn(2+) site. Residues 573-648 (VSENPFKNKT…LTEEEMNSLF (76 aa)) form the BRCT domain.

It belongs to the NAD-dependent DNA ligase family. LigA subfamily. Mg(2+) serves as cofactor. Mn(2+) is required as a cofactor.

The catalysed reaction is NAD(+) + (deoxyribonucleotide)n-3'-hydroxyl + 5'-phospho-(deoxyribonucleotide)m = (deoxyribonucleotide)n+m + AMP + beta-nicotinamide D-nucleotide.. In terms of biological role, DNA ligase that catalyzes the formation of phosphodiester linkages between 5'-phosphoryl and 3'-hydroxyl groups in double-stranded DNA using NAD as a coenzyme and as the energy source for the reaction. It is essential for DNA replication and repair of damaged DNA. The sequence is that of DNA ligase from Aliarcobacter butzleri (strain RM4018) (Arcobacter butzleri).